Here is a 268-residue protein sequence, read N- to C-terminus: MAVGKNKGLSKGGKKGGKKKVVDPFSRKDWYDVKAPNMFQTRQIGKTLVNRTQGQRIASDYLKGRVFEVSLADLQKDIDPERSFRKFRLIAEDVQDRNVLCNFHGMDLTTDKYRSMVKKWQTLIEAIVEAKTVDGYLLRVFCIGFTAKDQQSQRKTCYAQQSQVRKIRARMTDIITNEVSGADLKQLVNKLALDSIAKDIEKSCQRIYPLHDVYIRKVKVLKKPRFDVSKLLELHGDGGGKSVEAVVSSEGAVIDRPEGYEPPVQEAV.

Positions 1 to 21 (MAVGKNKGLSKGGKKGGKKKV) are disordered.

The protein belongs to the eukaryotic ribosomal protein eS1 family. In terms of assembly, component of the small ribosomal subunit. Mature ribosomes consist of a small (40S) and a large (60S) subunit. The 40S subunit contains about 33 different proteins and 1 molecule of RNA (18S). The 60S subunit contains about 49 different proteins and 3 molecules of RNA (28S, 5.8S and 5S).

It is found in the cytoplasm. Essential for oogenesis; required for late follicle cell development. This is Small ribosomal subunit protein eS1 from Drosophila erecta (Fruit fly).